The chain runs to 326 residues: Protein spaetzle (326 aa).

Residues 1–25 form the signal peptide; the sequence is MMTPMWISLFKVLLLLFAFFATYEA. An N-linked (GlcNAc...) asparagine glycan is attached at Asn48. Residues 56–82 are disordered; sequence FMPIPTQHDDPTQKQKQNQNQSPIPET. The segment covering 69-80 has biased composition (polar residues); it reads KQKQNQNQSPIP. Asn114 and Asn164 each carry an N-linked (GlcNAc...) asparagine glycan. The interval 152-174 is disordered; sequence YRPPQSPARPLRNDTKEHNPCAK. The span at 162-174 shows a compositional bias: basic and acidic residues; that stretch reads LRNDTKEHNPCAK. The 95-residue stretch at 228–322 folds into the Spaetzle domain; sequence FLCRSIRKLV…FKIPSCCKCA (95 aa). 3 cysteine pairs are disulfide-bonded: Cys230/Cys288, Cys267/Cys319, and Cys274/Cys321.

Homodimer; disulfide-linked. In the presence of Tl, crystal structures show one Tl molecule bound to a spaetzle C-106 homodimer. However, the active complex probably consists of two Tl molecules bound to a spaetzle C-106 homodimer. This is supported by in vitro experiments which also show binding of the spaetzle C-106 dimer to 2 Tl receptors. Ligand binding induces conformational changes in the extracellular domain of Tl. This may enable a secondary homodimerization interface at the C-terminus of the Tl extracellular domain. In terms of processing, during embryonic development proteolytically processed by activated ea/easter; ea cleaves the signal peptide and also generates the C-terminal 12 kDa active ligand for the Toll receptor, C-106 (except for isoform 8.24 and isoform 11.27 as they do not contain the cleavage site). During the immune response, cleaved in the same manner by SPE. Post-translationally, extracellular forms of isoform 8.19 and isoform 11.7 are glycosylated.

It is found in the secreted. The activated form, spaetzle C-106, acts as a ligand for the Toll receptor. Binding to Toll activates the Toll signaling pathway and induces expression of the antifungal peptide drosomycin. Component of the extracellular signaling pathway that establishes dorsal-ventral polarity in the embryo. This chain is Protein spaetzle, found in Drosophila melanogaster (Fruit fly).